Reading from the N-terminus, the 371-residue chain is Putative RNA-binding protein Luc7-like 1 (371 aa).

2 coiled-coil regions span residues 87–177 and 218–259; these read MDHL…RNSM and FIQI…LSRR. Over residues 232 to 257 the composition is skewed to basic and acidic residues; it reads VAEKQEKRNQDRLRRREEREREERLS. The interval 232-371 is disordered; the sequence is VAEKQEKRNQ…RSEEKEAGEI (140 aa). Residues 258 to 317 show a composition bias toward basic residues; that stretch reads RRSGSRTRDRRRSRSRDRRRRRSRSTSRERRKLSRSRSRDRHRRHRSRSRSHSRGHRRAS. Basic and acidic residues-rich tracts occupy residues 318–351 and 361–371; these read RDRSAKYKFSRERASREESWESGRSERGPPDWRL and RRSEEKEAGEI. Phosphoserine is present on residues serine 332, serine 336, and serine 363.

Belongs to the Luc7 family. As to expression, ubiquitous.

Its function is as follows. May bind to RNA via its Arg/Ser-rich domain. In Homo sapiens (Human), this protein is Putative RNA-binding protein Luc7-like 1 (LUC7L).